A 564-amino-acid chain; its full sequence is Sulfite reductase [NADPH] hemoprotein beta-component 1 (564 aa).

Residues cysteine 426, cysteine 432, cysteine 471, and cysteine 475 each contribute to the [4Fe-4S] cluster site. Residue cysteine 475 participates in siroheme binding.

It belongs to the nitrite and sulfite reductase 4Fe-4S domain family. In terms of assembly, alpha(8)-beta(8). The alpha component is a flavoprotein, the beta component is a hemoprotein. The cofactor is siroheme. It depends on [4Fe-4S] cluster as a cofactor.

The catalysed reaction is hydrogen sulfide + 3 NADP(+) + 3 H2O = sulfite + 3 NADPH + 4 H(+). It functions in the pathway sulfur metabolism; hydrogen sulfide biosynthesis; hydrogen sulfide from sulfite (NADPH route): step 1/1. Functionally, component of the sulfite reductase complex that catalyzes the 6-electron reduction of sulfite to sulfide. This is one of several activities required for the biosynthesis of L-cysteine from sulfate. The polypeptide is Sulfite reductase [NADPH] hemoprotein beta-component 1 (Pectobacterium carotovorum subsp. carotovorum (strain PC1)).